Reading from the N-terminus, the 289-residue chain is Pyridoxal kinase PdxY (289 aa).

Substrate contacts are provided by residues S9 and 44–45 (TQ). ATP contacts are provided by D112, V144, E149, and K182. D221 serves as a coordination point for substrate.

This sequence belongs to the pyridoxine kinase family. PdxY subfamily. Homodimer. Requires Mg(2+) as cofactor.

The enzyme catalyses pyridoxal + ATP = pyridoxal 5'-phosphate + ADP + H(+). It participates in cofactor metabolism; pyridoxal 5'-phosphate salvage; pyridoxal 5'-phosphate from pyridoxal: step 1/1. Functionally, pyridoxal kinase involved in the salvage pathway of pyridoxal 5'-phosphate (PLP). Catalyzes the phosphorylation of pyridoxal to PLP. The sequence is that of Pyridoxal kinase PdxY from Vibrio parahaemolyticus serotype O3:K6 (strain RIMD 2210633).